The chain runs to 235 residues: Urease accessory protein UreF (235 aa).

This sequence belongs to the UreF family. In terms of assembly, ureD, UreF and UreG form a complex that acts as a GTP-hydrolysis-dependent molecular chaperone, activating the urease apoprotein by helping to assemble the nickel containing metallocenter of UreC. The UreE protein probably delivers the nickel.

The protein localises to the cytoplasm. In terms of biological role, required for maturation of urease via the functional incorporation of the urease nickel metallocenter. The polypeptide is Urease accessory protein UreF (Pseudoalteromonas translucida (strain TAC 125)).